A 319-amino-acid chain; its full sequence is Protease HtpX homolog (319 aa).

The next 2 membrane-spanning stretches (helical) occupy residues 3 to 23 (LTVLALIGGYIVVLGVAAWAL) and 32 to 52 (TGVAFMLSLLALAMVLVQWLF). His-134 contributes to the Zn(2+) binding site. Residue Glu-135 is part of the active site. His-138 is a Zn(2+) binding site. The next 2 membrane-spanning stretches (helical) occupy residues 146–166 (VILALSLIPIAAFLIGRTLVW) and 182–202 (MALVAVGAALLAAGMVFQLIV). Glu-210 serves as a coordination point for Zn(2+).

It belongs to the peptidase M48B family. The cofactor is Zn(2+).

The protein resides in the cell membrane. The polypeptide is Protease HtpX homolog (Aeropyrum pernix (strain ATCC 700893 / DSM 11879 / JCM 9820 / NBRC 100138 / K1)).